Here is a 681-residue protein sequence, read N- to C-terminus: U3 small nucleolar ribonucleoprotein protein MPP10 (681 aa).

Residues Ser-61, Ser-120, and Ser-139 each carry the phosphoserine modification. The segment covering 105–147 (SLLPESEEQEREEDGSEIEADDKEDLEDLEEEEVSDMGNDDPE) has biased composition (acidic residues). Disordered regions lie at residues 105-202 (SLLP…IVDD) and 216-364 (NIEK…EKRQ). The stretch at 109 to 138 (ESEEQEREEDGSEIEADDKEDLEDLEEEEV) forms a coiled coil. A compositionally biased stretch (basic and acidic residues) spans 148–162 (MGERAENSSKSDLRK). Phosphoserine is present on residues Ser-163, Ser-167, and Ser-171. Residues 180-190 (LEQQSKVQNKG) show a composition bias toward polar residues. 2 stretches are compositionally biased toward basic and acidic residues: residues 193–202 (KPREKSIVDD) and 216–226 (NIEKEEERKDD). Positions 205 to 239 (FKLSEMEAYLENIEKEEERKDDNDEEEEDIDFFED) form a coiled coil. The segment covering 227–247 (NDEEEEDIDFFEDIDSDEDEG) has biased composition (acidic residues). A Phosphoserine modification is found at Ser-242. The segment covering 253–264 (KKLKSGKSSRNL) has biased composition (basic residues). Residues Ser-275 and Ser-289 each carry the phosphoserine modification. Residues 280–290 (TNVHDDELDSN) are compositionally biased toward basic and acidic residues. Coiled-coil stretches lie at residues 284 to 324 (DDEL…NKQH) and 348 to 382 (NVKK…LEKK). The segment covering 291-318 (KEDDEIAEEEAEELSISETDEDDDLQEN) has biased composition (acidic residues). Basic and acidic residues predominate over residues 319–329 (EDNKQHKESLK). Lys-350 participates in a covalent cross-link: Glycyl lysine isopeptide (Lys-Gly) (interchain with G-Cter in SUMO2). The span at 351-364 (KNSDEVKSSFEKRQ) shows a compositional bias: basic and acidic residues. Glycyl lysine isopeptide (Lys-Gly) (interchain with G-Cter in SUMO2) cross-links involve residues Lys-382 and Lys-394. A coiled-coil region spans residues 469 to 490 (LAEIYEQEYIKLNQQKTAEEEN). Lys-555 participates in a covalent cross-link: Glycyl lysine isopeptide (Lys-Gly) (interchain with G-Cter in SUMO2). Over residues 558–575 (NKAGDIKTAAEKTATDKK) the composition is skewed to basic and acidic residues. The disordered stretch occupies residues 558–606 (NKAGDIKTAAEKTATDKKRERRKKKYQKRMKIKEKEKRRKLLEKSSVDQ). Residues 574 to 604 (KKRERRKKKYQKRMKIKEKEKRRKLLEKSSV) are a coiled coil. Over residues 576-598 (RERRKKKYQKRMKIKEKEKRRKL) the composition is skewed to basic residues. Lys-609 is subject to N6-acetyllysine. Glycyl lysine isopeptide (Lys-Gly) (interchain with G-Cter in SUMO2) cross-links involve residues Lys-632 and Lys-649. Residues 648–670 (SKLQDQVKMQINDAKKTEKKKKK) adopt a coiled-coil conformation. The interval 660–681 (DAKKTEKKKKKRQDISVHKLKL) is disordered. Positions 672–681 (QDISVHKLKL) are enriched in basic and acidic residues.

Belongs to the MPP10 family. In terms of assembly, part of the small subunit (SSU) processome, composed of more than 70 proteins and the RNA chaperone small nucleolar RNA (snoRNA) U3. Component of a heterotrimeric complex containing IMP3, IMP4 and MPHOSPH10. Interacts with IMP3 and IMP4. In terms of processing, phosphorylated in M (mitotic) phase.

The protein localises to the nucleus. Its subcellular location is the nucleolus. It localises to the chromosome. Component of the 60-80S U3 small nucleolar ribonucleoprotein (U3 snoRNP). Required for the early cleavages during pre-18S ribosomal RNA processing. Part of the small subunit (SSU) processome, first precursor of the small eukaryotic ribosomal subunit. During the assembly of the SSU processome in the nucleolus, many ribosome biogenesis factors, an RNA chaperone and ribosomal proteins associate with the nascent pre-rRNA and work in concert to generate RNA folding, modifications, rearrangements and cleavage as well as targeted degradation of pre-ribosomal RNA by the RNA exosome. The polypeptide is U3 small nucleolar ribonucleoprotein protein MPP10 (Homo sapiens (Human)).